A 333-amino-acid polypeptide reads, in one-letter code: Photosystem II assembly lipoprotein Ycf48 (333 aa).

The signal sequence occupies residues Met1–Gly23. A lipid anchor (N-palmitoyl cysteine) is attached at Cys24. Cys24 is lipidated: S-diacylglycerol cysteine.

Belongs to the Ycf48 family. Part of early PSII assembly complexes which includes D1 (psbA) and PsbI; not found in mature PSII. Binds to the lumenal side of PSII complexes. Interacts with YidC.

Its subcellular location is the cellular thylakoid membrane. A factor required for optimal assembly of photosystem II (PSII), acting in the early stages of PSII assembly. Also plays a role in replacement of photodamaged D1 (psbA). Assists YidC in synthesis of chlorophyll-binding proteins. This chain is Photosystem II assembly lipoprotein Ycf48, found in Synechococcus sp. (strain CC9605).